The following is a 466-amino-acid chain: 5-hydroxytryptamine receptor (466 aa).

Residues methionine 1–serine 21 are disordered. Residues methionine 1–serine 66 lie on the Extracellular side of the membrane. Residues asparagine 2, asparagine 10, asparagine 29, asparagine 41, asparagine 45, and asparagine 50 are each glycosylated (N-linked (GlcNAc...) asparagine). A compositionally biased stretch (polar residues) spans asparagine 10 to serine 21. The chain crosses the membrane as a helical span at residues valine 67–isoleucine 89. The Cytoplasmic portion of the chain corresponds to glutamate 90–tyrosine 99. The chain crosses the membrane as a helical span at residues leucine 100–valine 121. At tyrosine 122–aspartate 136 the chain is on the extracellular side. Cysteine 135 and cysteine 215 are disulfide-bonded. The chain crosses the membrane as a helical span at residues methionine 137–threonine 158. At aspartate 159–arginine 177 the chain is on the cytoplasmic side. Residues isoleucine 178–tryptophan 200 form a helical membrane-spanning segment. The Extracellular portion of the chain corresponds to lysine 201–threonine 228. Residues methionine 229 to alanine 250 form a helical membrane-spanning segment. Residues arginine 251–threonine 386 lie on the Cytoplasmic side of the membrane. 2 disordered regions span residues arginine 255–arginine 282 and valine 339–arginine 360. Over residues valine 339–threonine 353 the composition is skewed to low complexity. Residues leucine 387–isoleucine 410 traverse the membrane as a helical segment. At cysteine 411 to tyrosine 419 the chain is on the extracellular side. A helical transmembrane segment spans residues leucine 420–phenylalanine 442. Topologically, residues serine 443–phenylalanine 466 are cytoplasmic.

The protein belongs to the G-protein coupled receptor 1 family.

It is found in the cell membrane. Its function is as follows. This is a receptor for 5-hydroxytryptamine (serotonin), a biogenic hormone that function as a neurotransmitter, a hormone, and a mitogen. The sequence is that of 5-hydroxytryptamine receptor from Heliothis virescens (Tobacco budworm moth).